The chain runs to 384 residues: Xylose repressor (384 aa).

Positions 29-48 (RAKLSEMTGLNKSTVSSQVN) form a DNA-binding region, H-T-H motif.

It belongs to the ROK (NagC/XylR) family.

Transcriptional repressor of xylose-utilizing enzymes. The polypeptide is Xylose repressor (xylR) (Bacillus spizizenii (strain ATCC 23059 / NRRL B-14472 / W23) (Bacillus subtilis subsp. spizizenii)).